Reading from the N-terminus, the 712-residue chain is Voltage-gated chloride channel TMC4 (712 aa).

A disordered region spans residues 1-39 (MEENPTLESEAWGSSRGWLAPREARGAPCSSPGPSLSSV). The Extracellular segment spans residues 1–168 (MEENPTLESE…GTESYFSLLR (168 aa)). A glycan (N-linked (GlcNAc...) asparagine) is linked at Asn-107. The chain crosses the membrane as a helical span at residues 169-189 (FLLLLNVLASVLMACMTLLPT). Residues 190–249 (WLGGAPPGPPGPDISSPCGSYNPHSQGLVTFATQLFNLLSGEGYLEWSPLFYGFYPPRPR) are Cytoplasmic-facing. A helical transmembrane segment spans residues 250–270 (LAVTYLCWAFAVGLICLLLIL). At 271 to 348 (HRSVSGLKQT…GQQARVWLVR (78 aa)) the chain is on the extracellular side. Residues 349 to 369 (VLLNLLVVALLGAAFYGVYWA) traverse the membrane as a helical segment. At 370-394 (TGCTVELQEMPLVQELPLLKLGVNY) the chain is on the cytoplasmic side. Residues 395-415 (LPSIFIAGVNFVLPPVFKLIA) form a helical membrane-spanning segment. The Extracellular portion of the chain corresponds to 416–425 (PLEGYTRSRQ). Residues 426 to 446 (IVFILLRTVFLRLASLVVLLF) form a helical membrane-spanning segment. Residues 447–483 (SLWNQITCGGDSEAEDCKTCGYNYKQLPCWETVLGQE) are Cytoplasmic-facing. The helical transmembrane segment at 484–504 (MYKLLLFDLLTVLAVALLIQF) threads the bilayer. Topologically, residues 505-542 (PRKLLCGLCPGALGRLAGTQEFQVPDEVLGLIYAQTVV) are extracellular. The helical transmembrane segment at 543-565 (WVGSFFCPLLPLLNTVKFLLLFY) threads the bilayer. The Cytoplasmic portion of the chain corresponds to 566–592 (LKKLTLFSTCSPAARTFRASAANFFFP). A helical transmembrane segment spans residues 593 to 613 (LVLLLGLAISSVPLLYSIFLI). The Extracellular portion of the chain corresponds to 614 to 654 (PPSKLCGPFRGQSSIWAQIPESISSLPETTQNFLFFLGTQA). A helical transmembrane segment spans residues 655-677 (FAVPLLLISSILMAYTVALANSY). The Cytoplasmic portion of the chain corresponds to 678–712 (GRLISELKRQRQTEAQNKVFLARRAVALTSTKPAL).

The protein belongs to the TMC family.

Its subcellular location is the membrane. The catalysed reaction is chloride(in) = chloride(out). Its function is as follows. Voltage-gated chloride channel involved in high-concentration salt taste sensation. Depolarization induced by high NaCl concentration may trigger the activation of TMC4-mediated chloride influx into taste bud cells, helping the return to resting potential. Also allows permeation of organic anions including gluconate, but their current amplitudes at positive potentials are less than that of chloride. Involved in pH and temperature-dependent modulation of salty taste. In Homo sapiens (Human), this protein is Voltage-gated chloride channel TMC4.